A 91-amino-acid polypeptide reads, in one-letter code: Small ribosomal subunit protein uS19 (91 aa).

The protein belongs to the universal ribosomal protein uS19 family.

In terms of biological role, protein S19 forms a complex with S13 that binds strongly to the 16S ribosomal RNA. In Neorickettsia sennetsu (strain ATCC VR-367 / Miyayama) (Ehrlichia sennetsu), this protein is Small ribosomal subunit protein uS19.